The sequence spans 192 residues: Protein A16 (192 aa).

Positions 1–22 (MLLANTAAAVLLLIVCIGASVG) are cleaved as a signal peptide. One can recognise a C-type lectin domain in the interval 71–186 (KNKKFTIGTL…CLNPLNIFPY (116 aa)). The cysteines at positions 163 and 177 are disulfide-linked.

Expressed in the gut of adults.

This is Protein A16 (CTL3) from Anopheles gambiae (African malaria mosquito).